A 230-amino-acid chain; its full sequence is 2-C-methyl-D-erythritol 4-phosphate cytidylyltransferase (230 aa).

Belongs to the IspD/TarI cytidylyltransferase family. IspD subfamily.

The enzyme catalyses 2-C-methyl-D-erythritol 4-phosphate + CTP + H(+) = 4-CDP-2-C-methyl-D-erythritol + diphosphate. Its pathway is isoprenoid biosynthesis; isopentenyl diphosphate biosynthesis via DXP pathway; isopentenyl diphosphate from 1-deoxy-D-xylulose 5-phosphate: step 2/6. Catalyzes the formation of 4-diphosphocytidyl-2-C-methyl-D-erythritol from CTP and 2-C-methyl-D-erythritol 4-phosphate (MEP). The protein is 2-C-methyl-D-erythritol 4-phosphate cytidylyltransferase of Synechocystis sp. (strain ATCC 27184 / PCC 6803 / Kazusa).